The sequence spans 239 residues: Pyridoxine 5'-phosphate synthase (239 aa).

3-amino-2-oxopropyl phosphate is bound at residue asparagine 7. 9–10 (DH) contributes to the 1-deoxy-D-xylulose 5-phosphate binding site. Arginine 18 lines the 3-amino-2-oxopropyl phosphate pocket. The active-site Proton acceptor is histidine 43. The 1-deoxy-D-xylulose 5-phosphate site is built by arginine 45 and histidine 50. Glutamate 70 acts as the Proton acceptor in catalysis. Threonine 100 is a binding site for 1-deoxy-D-xylulose 5-phosphate. Histidine 191 acts as the Proton donor in catalysis. Residues glycine 192 and 213-214 (GH) each bind 3-amino-2-oxopropyl phosphate.

Belongs to the PNP synthase family. Homooctamer; tetramer of dimers.

The protein localises to the cytoplasm. The enzyme catalyses 3-amino-2-oxopropyl phosphate + 1-deoxy-D-xylulose 5-phosphate = pyridoxine 5'-phosphate + phosphate + 2 H2O + H(+). It participates in cofactor biosynthesis; pyridoxine 5'-phosphate biosynthesis; pyridoxine 5'-phosphate from D-erythrose 4-phosphate: step 5/5. In terms of biological role, catalyzes the complicated ring closure reaction between the two acyclic compounds 1-deoxy-D-xylulose-5-phosphate (DXP) and 3-amino-2-oxopropyl phosphate (1-amino-acetone-3-phosphate or AAP) to form pyridoxine 5'-phosphate (PNP) and inorganic phosphate. In Geotalea daltonii (strain DSM 22248 / JCM 15807 / FRC-32) (Geobacter daltonii), this protein is Pyridoxine 5'-phosphate synthase.